Here is a 96-residue protein sequence, read N- to C-terminus: Co-chaperonin GroES (96 aa).

It belongs to the GroES chaperonin family. Heptamer of 7 subunits arranged in a ring. Interacts with the chaperonin GroEL.

It is found in the cytoplasm. Together with the chaperonin GroEL, plays an essential role in assisting protein folding. The GroEL-GroES system forms a nano-cage that allows encapsulation of the non-native substrate proteins and provides a physical environment optimized to promote and accelerate protein folding. GroES binds to the apical surface of the GroEL ring, thereby capping the opening of the GroEL channel. In Alcanivorax borkumensis (strain ATCC 700651 / DSM 11573 / NCIMB 13689 / SK2), this protein is Co-chaperonin GroES.